A 1271-amino-acid polypeptide reads, in one-letter code: Clustered mitochondria protein homolog (1271 aa).

TPR repeat units follow at residues 104 to 138 (RHKP…ELGE) and 502 to 535 (CYGL…KPHK). In terms of domain architecture, Clu spans 329–580 (DQSRPQLSIL…RSTPLDIDFI (252 aa)). The span at 729-763 (QEEKSKIEDNEKAIEEEKKEEKTEKKEEKEEKADE) shows a compositional bias: basic and acidic residues. A disordered region spans residues 729-783 (QEEKSKIEDNEKAIEEEKKEEKTEKKEEKEEKADEEKSENEEDKTKPEEPSKGVF). TPR repeat units follow at residues 1067 to 1100 (ISSY…WDFV), 1109 to 1142 (VTTL…SEKI), and 1151 to 1184 (AMIH…FSRH). The segment at 1212–1271 (QAKDKNKPKKVKAPPVPPQATTKKSKNKSKMAQTQISKLHLNSSTRFSSSSRVKPRLKKK) is disordered. Polar residues predominate over residues 1241–1253 (KMAQTQISKLHLN). The segment covering 1254–1263 (SSTRFSSSSR) has biased composition (low complexity).

This sequence belongs to the CLU family. As to quaternary structure, may associate with the eukaryotic translation initiation factor 3 (eIF-3) complex.

The protein localises to the cytoplasm. In terms of biological role, mRNA-binding protein involved in proper cytoplasmic distribution of mitochondria. This chain is Clustered mitochondria protein homolog, found in Meyerozyma guilliermondii (strain ATCC 6260 / CBS 566 / DSM 6381 / JCM 1539 / NBRC 10279 / NRRL Y-324) (Yeast).